Consider the following 118-residue polypeptide: UPF0231 protein PM0457 (118 aa).

This sequence belongs to the UPF0231 family.

The chain is UPF0231 protein PM0457 from Pasteurella multocida (strain Pm70).